Here is a 197-residue protein sequence, read N- to C-terminus: Sec-independent protein translocase protein TatB (197 aa).

Residues 1-21 traverse the membrane as a helical segment; the sequence is MFDIGFGELLLVMVLGLIVLG. Positions 93-197 are disordered; sequence KRGYTETPSP…ASARQPSDSR (105 aa). Basic and acidic residues-rich tracts occupy residues 104-113 and 160-169; these read KSDDPKKSGD and NHNDGRHATS. The span at 180–197 shows a compositional bias: low complexity; that stretch reads PEQSQPSAASARQPSDSR.

This sequence belongs to the TatB family. In terms of assembly, the Tat system comprises two distinct complexes: a TatABC complex, containing multiple copies of TatA, TatB and TatC subunits, and a separate TatA complex, containing only TatA subunits. Substrates initially bind to the TatABC complex, which probably triggers association of the separate TatA complex to form the active translocon.

It localises to the cell inner membrane. In terms of biological role, part of the twin-arginine translocation (Tat) system that transports large folded proteins containing a characteristic twin-arginine motif in their signal peptide across membranes. Together with TatC, TatB is part of a receptor directly interacting with Tat signal peptides. TatB may form an oligomeric binding site that transiently accommodates folded Tat precursor proteins before their translocation. This chain is Sec-independent protein translocase protein TatB, found in Pectobacterium atrosepticum (strain SCRI 1043 / ATCC BAA-672) (Erwinia carotovora subsp. atroseptica).